Consider the following 763-residue polypeptide: Disintegrin and metalloproteinase domain-containing protein 29 (763 aa).

The signal sequence occupies residues 1-31 (MNMIEALLSMRVLFLTQVFGIFLCFPGLTKA). A propeptide spanning residues 32–200 (GHLHYHSSIE…ILKQSSFEDW (169 aa)) is cleaved from the precursor. N-linked (GlcNAc...) asparagine glycosylation is found at N164, N177, and N223. At 201–684 (WTHTKIVELV…KTNKKKHFFY (484 aa)) the chain is on the extracellular side. The 192-residue stretch at 205–396 (KIVELVVVVD…NTRCLMENMY (192 aa)) folds into the Peptidase M12B domain. 3 cysteine pairs are disulfide-bonded: C313/C390, C353/C375, and C355/C360. N374, N424, N434, N475, and N584 each carry an N-linked (GlcNAc...) asparagine glycan. Residues 403 to 489 (RTRCGNGVVE…ECPDDAYVED (87 aa)) form the Disintegrin domain. C461 and C481 form a disulfide bridge. Intrachain disulfides connect C631/C642, C636/C648, and C650/C659. The EGF-like domain maps to 631-660 (CTPAFCNYRGICNNKHHCHCNFHWDPPNCM). The chain crosses the membrane as a helical span at residues 685-705 (LLLLQLIILACLLSCLLWLLF). Topologically, residues 706–763 (NIKGSKRKPQVQPTPVKTKKVSKKVPSQKPSPVPSPSLPQLRMPSRSASPTSSIKSTN) are cytoplasmic. The disordered stretch occupies residues 712 to 763 (RKPQVQPTPVKTKKVSKKVPSQKPSPVPSPSLPQLRMPSRSASPTSSIKSTN). The segment covering 751–763 (RSASPTSSIKSTN) has biased composition (polar residues).

The protein localises to the membrane. In terms of biological role, may be involved in spermatogenesis and fertilization. Seems to be a non catalytic metalloprotease-like protein. The protein is Disintegrin and metalloproteinase domain-containing protein 29 (Adam29) of Mus musculus (Mouse).